Reading from the N-terminus, the 482-residue chain is F-box/LRR-repeat protein At3g58930 (482 aa).

The F-box domain occupies 1–47 (MDRVSNLPDGVRGHILSFLPAKHIALTSVLSKSWLNLWKLIPILDID). LRR repeat units lie at residues 122 to 150 (SYEDTQEDEDMLPQEMFVSKTLVKLKIRN), 175 to 200 (SDLILWGKMKRFLSSFPVLEELRMAS), 222 to 248 (GTGCEDYVNPKSISFDTPSLLYLNYSD), 313 to 344 (ILYLTADTLEVLSLCCESMPVFNNLKTLGIKS), and 345 to 370 (EEGRGWQAVPALLRNCPHLEYLIIEG).

This is F-box/LRR-repeat protein At3g58930 from Arabidopsis thaliana (Mouse-ear cress).